A 220-amino-acid chain; its full sequence is Carbonic anhydrase (220 aa).

Positions 39, 41, 98, and 101 each coordinate Zn(2+).

It belongs to the beta-class carbonic anhydrase family. Requires Zn(2+) as cofactor.

The catalysed reaction is hydrogencarbonate + H(+) = CO2 + H2O. The polypeptide is Carbonic anhydrase (cynT) (Pseudomonas aeruginosa (strain ATCC 15692 / DSM 22644 / CIP 104116 / JCM 14847 / LMG 12228 / 1C / PRS 101 / PAO1)).